We begin with the raw amino-acid sequence, 1272 residues long: CST complex subunit CTC1 (1272 aa).

The protein belongs to the CTC1 family. As to quaternary structure, component of the CST complex, composed of CTC1, TEN1 and STN1. Interacts with POT1A.

The protein resides in the nucleus. The protein localises to the chromosome. Its subcellular location is the telomere. Functionally, component of the CST complex, a complex that binds to single-stranded DNA and is required to protect telomeres from DNA degradation. The CST complex binds single-stranded DNA with high affinity in a sequence-independent manner, while isolated subunits bind DNA with low affinity by themselves. Associates with enzymatically active telomerase. The sequence is that of CST complex subunit CTC1 from Arabidopsis thaliana (Mouse-ear cress).